The following is a 168-amino-acid chain: Cyclin-dependent kinase 4 inhibitor C (168 aa).

ANK repeat units lie at residues 4-33 (PWGNELASAAARGDLEQLTSLLQNNVNVNA), 37-65 (FGRTALQVMKLGNPEIARRLLLRGANPDL), 69-98 (TGFAVIHDAARAGFLDTLQTLLEFQADVNI), and 102-132 (EGNLPLHLAAKEGHLRVVEFLVKHTASNVGH).

Belongs to the CDKN2 cyclin-dependent kinase inhibitor family. As to quaternary structure, heterodimer of p18 with CDK6. In terms of tissue distribution, highest levels found in skeletal muscle. Also found in pancreas and heart.

Interacts strongly with CDK6, weakly with CDK4. Inhibits cell growth and proliferation with a correlated dependence on endogenous retinoblastoma protein RB. This Homo sapiens (Human) protein is Cyclin-dependent kinase 4 inhibitor C (CDKN2C).